The following is a 297-amino-acid chain: HTH-type transcriptional regulator IlvY (297 aa).

Residues 1–58 (MDLRDLKTFLHLAESRHFGRSARAMHVSPSTLSRQIQRLEEDLGQPLFVRDNRTVTLT) enclose the HTH lysR-type domain. The H-T-H motif DNA-binding region spans 18–37 (FGRSARAMHVSPSTLSRQIQ).

It belongs to the LysR transcriptional regulatory family.

The protein localises to the cytoplasm. In terms of biological role, this protein activates the transcription of the ilvC gene in the presence of acetolactate or acetohydroxybutyrate. IlvY is also a negative regulator of its own expression. The protein is HTH-type transcriptional regulator IlvY (ilvY) of Escherichia coli (strain K12).